The sequence spans 179 residues: Stathmin-2 (179 aa).

Positions 1–26 are membrane attachment; that stretch reads MAKTAMAYKEKMKELSMLSLICSCFY. 6 positions are modified to phosphoserine: S16, S50, S62, S73, S80, and S97. The SLD domain maps to 38-179; it reads DDMEVKQINK…NKELQVELSG (142 aa). Residues 39–96 form a regulatory/phosphorylation domain region; the sequence is DMEVKQINKRASGQAFELILKPPSPVSEAPRTLASPKKKELSLEEIQKKLEAAEERRK. Residues 74–179 are a coiled coil; sequence PKKKELSLEE…NKELQVELSG (106 aa).

The protein belongs to the stathmin family. Expression is neuron-specific and found in cerebellum, forebrain, midbrain, tectum and spinal cord.

It is found in the cytoplasm. It localises to the perinuclear region. The protein resides in the cell projection. The protein localises to the growth cone. Its subcellular location is the membrane. It is found in the axon. It localises to the lamellipodium. Functionally, is a key regulator of neurite extension through regulation of microtubule instabilily. In Gallus gallus (Chicken), this protein is Stathmin-2 (STMN2).